A 321-amino-acid chain; its full sequence is Probable 1-aminocyclopropane-1-carboxylate oxidase (321 aa).

The region spanning 159-259 (PTFGTKVSNY…RMSIASFYNP (101 aa)) is the Fe2OG dioxygenase domain. The Fe cation site is built by H183, D185, and H240.

This sequence belongs to the iron/ascorbate-dependent oxidoreductase family. Fe cation is required as a cofactor.

The catalysed reaction is 1-aminocyclopropane-1-carboxylate + L-ascorbate + O2 = ethene + L-dehydroascorbate + hydrogen cyanide + CO2 + 2 H2O. Its pathway is alkene biosynthesis; ethylene biosynthesis via S-adenosyl-L-methionine; ethylene from S-adenosyl-L-methionine: step 2/2. This chain is Probable 1-aminocyclopropane-1-carboxylate oxidase (ACO), found in Dianthus caryophyllus (Carnation).